Here is a 931-residue protein sequence, read N- to C-terminus: Dual serine/threonine and tyrosine protein kinase (931 aa).

The tract at residues 1–24 (MEGDAPQRVSERVSGPGPGGGGGG) is disordered. A coiled-coil region spans residues 397 to 424 (RKKENELYESLMNIANRKQEEMKDMICE). One can recognise a Protein kinase domain in the interval 654–908 (PKLGQELGRG…PLLGIVQPML (255 aa)). ATP is bound by residues 660 to 668 (LGRGQYGVV) and Lys-683. Asp-779 serves as the catalytic Proton acceptor.

This sequence belongs to the protein kinase superfamily. Ser/Thr protein kinase family.

Its subcellular location is the cytoplasm. It is found in the cell membrane. The protein resides in the apical cell membrane. It localises to the basolateral cell membrane. The protein localises to the cell junction. It catalyses the reaction L-seryl-[protein] + ATP = O-phospho-L-seryl-[protein] + ADP + H(+). It carries out the reaction L-threonyl-[protein] + ATP = O-phospho-L-threonyl-[protein] + ADP + H(+). The catalysed reaction is L-tyrosyl-[protein] + ATP = O-phospho-L-tyrosyl-[protein] + ADP + H(+). Functionally, acts as a positive regulator of ERK phosphorylation downstream of fibroblast growth factor-receptor activation. Involved in the regulation of both caspase-dependent apoptosis and caspase-independent cell death. In the skin, it plays a predominant role in suppressing caspase-dependent apoptosis in response to UV stress in a range of dermal cell types. This is Dual serine/threonine and tyrosine protein kinase (DSTYK) from Canis lupus familiaris (Dog).